The chain runs to 964 residues: Phosphoenolpyruvate carboxylase (964 aa).

The residue at position 11 (Ser-11) is a Phosphoserine. Residues His-172 and Lys-600 contribute to the active site.

The protein belongs to the PEPCase type 1 family. As to quaternary structure, homotetramer. Mg(2+) is required as a cofactor.

It is found in the cytoplasm. It carries out the reaction oxaloacetate + phosphate = phosphoenolpyruvate + hydrogencarbonate. Its pathway is photosynthesis; C4 acid pathway. By light-reversible phosphorylation. Its function is as follows. Through the carboxylation of phosphoenolpyruvate (PEP) it forms oxaloacetate, a four-carbon dicarboxylic acid source for the tricarboxylic acid cycle. The polypeptide is Phosphoenolpyruvate carboxylase (PPC) (Nicotiana tabacum (Common tobacco)).